We begin with the raw amino-acid sequence, 325 residues long: Porphobilinogen deaminase (325 aa).

Position 253 is an S-(dipyrrolylmethanemethyl)cysteine (cysteine 253).

Belongs to the HMBS family. Dipyrromethane serves as cofactor.

It catalyses the reaction 4 porphobilinogen + H2O = hydroxymethylbilane + 4 NH4(+). It functions in the pathway porphyrin-containing compound metabolism; protoporphyrin-IX biosynthesis; coproporphyrinogen-III from 5-aminolevulinate: step 2/4. Tetrapolymerization of the monopyrrole PBG into the hydroxymethylbilane pre-uroporphyrinogen in several discrete steps. The protein is Porphobilinogen deaminase (hemC) of Dictyostelium discoideum (Social amoeba).